The chain runs to 506 residues: Maturase K (506 aa).

Belongs to the intron maturase 2 family. MatK subfamily.

It is found in the plastid. Its subcellular location is the chloroplast. Functionally, usually encoded in the trnK tRNA gene intron. Probably assists in splicing its own and other chloroplast group II introns. The protein is Maturase K of Gaultheria procumbens (Wintergreen).